We begin with the raw amino-acid sequence, 294 residues long: Serine/threonine-protein kinase Aurora-1 (294 aa).

One can recognise a Protein kinase domain in the interval 31–282; sequence FDIGKPLGRG…LHKLLEHPWI (252 aa). ATP-binding positions include 37-45 and Lys60; that span reads LGRGKFGHV. Asp154 functions as the Proton acceptor in the catalytic mechanism. Position 176 is a phosphoserine (Ser176). Position 185 is a phosphothreonine (Thr185).

It belongs to the protein kinase superfamily. Ser/Thr protein kinase family. Aurora subfamily. In terms of assembly, interacts with TPX2. In terms of processing, phosphorylation at Thr-185 may regulate activity and degradation of AUR1 in a cell cycle dependent manner. In terms of tissue distribution, abundant in roots, flowers and flower buds, low or absent in expanded leaves, stems and siliques.

The protein resides in the nucleus membrane. The protein localises to the cytoplasm. It localises to the cytoskeleton. It is found in the spindle. Its subcellular location is the spindle pole. The protein resides in the phragmoplast. It carries out the reaction L-seryl-[protein] + ATP = O-phospho-L-seryl-[protein] + ADP + H(+). It catalyses the reaction L-threonyl-[protein] + ATP = O-phospho-L-threonyl-[protein] + ADP + H(+). Phosphorylates specifically 'Ser-10' of histone H3 in vitro and colocalizes with phosphorylated histone H3 during mitosis. Associates with cytoskeletal structures that are necessary for cytokinesis and with the microtubule spindle. Also colocalizes with gamma-tubulin and function in microtubule organizing centers (MTOCs). In contrast with the mammalian B-type Aurora, AUR1 has no kinase activity toward 'Ser-28' of histone H3. The sequence is that of Serine/threonine-protein kinase Aurora-1 (AUR1) from Arabidopsis thaliana (Mouse-ear cress).